The following is a 480-amino-acid chain: UDP-glucose 6-dehydrogenase 5 (480 aa).

NAD(+) contacts are provided by residues 8-13, D33, R38, 86-90, 127-128, and E161; these read GAGYVG, VNTPT, and ST. Substrate is bound by residues 157–161, 216–223, and 256–269; these read EFLAE, KLAANAFL, and RIGP…VGFG. C272 serves as the catalytic Nucleophile. Residue 272–275 participates in NAD(+) binding; sequence CFQK. A substrate-binding site is contributed by 334-335; it reads FK. Residue R342 participates in NAD(+) binding. S393 bears the Phosphoserine mark. R447 serves as a coordination point for substrate.

Belongs to the UDP-glucose/GDP-mannose dehydrogenase family.

It carries out the reaction UDP-alpha-D-glucose + 2 NAD(+) + H2O = UDP-alpha-D-glucuronate + 2 NADH + 3 H(+). The protein operates within nucleotide-sugar biosynthesis; UDP-alpha-D-glucuronate biosynthesis; UDP-alpha-D-glucuronate from UDP-alpha-D-glucose: step 1/1. Involved in the biosynthesis of UDP-glucuronic acid (UDP-GlcA), providing nucleotide sugars for cell-wall polymers. In Oryza sativa subsp. japonica (Rice), this protein is UDP-glucose 6-dehydrogenase 5 (UGD5).